The following is a 470-amino-acid chain: Chromosomal replication initiator protein DnaA (470 aa).

The segment at 1 to 79 (MTDDTWGLLR…AVQRLAFKVA (79 aa)) is domain I, interacts with DnaA modulators. The segment at 79-128 (AANSPTRPVQPTMSEAIEEPAPLQTTVVDQLGNQEGNTSVKSPPEDLQAA) is domain II. Residues 129-350 (PLDPRFTFDS…GALTRLFAFA (222 aa)) are domain III, AAA+ region. The ATP site is built by G173, G175, K176, and T177. Residues 351 to 470 (SLVGREIDMD…VEMLRRSLEA (120 aa)) are domain IV, binds dsDNA.

It belongs to the DnaA family. Oligomerizes as a right-handed, spiral filament on DNA at oriC.

The protein resides in the cytoplasm. Functionally, plays an essential role in the initiation and regulation of chromosomal replication. ATP-DnaA binds to the origin of replication (oriC) to initiate formation of the DNA replication initiation complex once per cell cycle. Binds the DnaA box (a 9 base pair repeat at the origin) and separates the double-stranded (ds)DNA. Forms a right-handed helical filament on oriC DNA; dsDNA binds to the exterior of the filament while single-stranded (ss)DNA is stabiized in the filament's interior. The ATP-DnaA-oriC complex binds and stabilizes one strand of the AT-rich DNA unwinding element (DUE), permitting loading of DNA polymerase. After initiation quickly degrades to an ADP-DnaA complex that is not apt for DNA replication. Binds acidic phospholipids. In Ruegeria sp. (strain TM1040) (Silicibacter sp.), this protein is Chromosomal replication initiator protein DnaA.